A 472-amino-acid chain; its full sequence is MMQHASPAPALTMMATQNVPPPPYQDSPQMTATTQPPSKAQAVHISAPSAAASTPVPSAPIDPQAQLEADKRAVYRHPLFPLLTLLFEKCEQATQGSECITSASFDVDIENFVHQQEQEHKPFFSDDPELDNLMVKAIQVLRIHLLELEKVNELCKDFCNRYITCLKTKMHSDNLLRNDLGGPYSPNQPSINLHSQDLLQNSPNSMSGVSNNPQGIVVPASALQQGNIAMTTVNSQVVSGGALYQPVTMVTSQGQVVTQAIPQGAIQIQNTQVNLDLTSLLDNEDKKSKNKRGVLPKHATNIMRSWLFQHLMHPYPTEDEKRQIAAQTNLTLLQVNNWFVNARRRILQPMLDASNPDPAPKAKKIKSQHRPTQRFWPNSIAAGVLQQQGGAPGTNPDGSINLDNLQSLSSDNATMAMQQAMMAAHDDSLDGTEEEDEDEMEEEEEEELEEEVDELQTTNVSDLGLEHSDSLV.

Residues 1–62 are disordered; that stretch reads MMQHASPAPA…STPVPSAPID (62 aa). Positions 26 to 38 are enriched in polar residues; the sequence is DSPQMTATTQPPS. Residues 46-56 show a composition bias toward low complexity; sequence SAPSAAASTPV. In terms of domain architecture, MEIS N-terminal spans 96–179; that stretch reads GSECITSASF…MHSDNLLRND (84 aa). A DNA-binding region (homeobox) is located at residues 291 to 350; that stretch reads KRGVLPKHATNIMRSWLFQHLMHPYPTEDEKRQIAAQTNLTLLQVNNWFVNARRRILQPM. 3 disordered regions span residues 351–371, 386–405, and 423–472; these read LDAS…QHRP, QQQG…LDNL, and AAHD…DSLV. The segment covering 361–371 has biased composition (basic residues); sequence KAKKIKSQHRP. Residues 396–405 are compositionally biased toward polar residues; it reads PDGSINLDNL. Residues 429–454 are compositionally biased toward acidic residues; the sequence is LDGTEEEDEDEMEEEEEEELEEEVDE.

Belongs to the TALE/MEIS homeobox family.

It is found in the nucleus. The chain is Homeobox protein PKNOX2 (PKNOX2) from Pongo abelii (Sumatran orangutan).